A 91-amino-acid chain; its full sequence is Dynein light chain 1, cytoplasmic (91 aa).

It belongs to the dynein light chain family. Homodimer. Cytoplasmic dynein consists of two catalytic heavy chains (HCs) and a number of non-catalytic subunits which present intermediate chains (ICs), light intermediate chains (LICs) and light chains (LCs). Component of the nuclear pore complex (NPC). NPC constitutes the exclusive means of nucleocytoplasmic transport. NPCs allow the passive diffusion of ions and small molecules and the active, nuclear transport receptor-mediated bidirectional transport of macromolecules such as proteins, RNAs, ribonucleoparticles (RNPs), and ribosomal subunits across the nuclear envelope. Due to its 8-fold rotational symmetry, all subunits are present with 8 copies or multiples thereof.

The protein localises to the cytoplasm. Its subcellular location is the cytoskeleton. It localises to the nucleus. The protein resides in the nuclear pore complex. Functionally, acts as one of several non-catalytic accessory components of the cytoplasmic dynein complex that are thought to be involved in linking dynein to cargos and to adapter proteins that regulate dynein function. Cytoplasmic dynein 1 acts as a motor for the intracellular retrograde motility of vesicles and organelles along microtubules. May play a role in changing or maintaining the spatial distribution of cytoskeletal structures. Also a component of the nuclear pore complex. This is Dynein light chain 1, cytoplasmic (DYN2) from Debaryomyces hansenii (strain ATCC 36239 / CBS 767 / BCRC 21394 / JCM 1990 / NBRC 0083 / IGC 2968) (Yeast).